Consider the following 142-residue polypeptide: Protein spalt-accessory (142 aa).

A signal peptide spans 1-16; that stretch reads MKLLIALFALVTAVNA. The interval 75–142 is disordered; it reads GFAGQGSPNQ…HHEHHGHHRH (68 aa). Basic and acidic residues predominate over residues 107 to 124; that stretch reads GHFHENPHEYPEHHGDHH. Residues 125-142 are compositionally biased toward basic residues; the sequence is REHHEHHGHHEHHGHHRH.

The protein localises to the secreted. Likely to be involved in the establishment of the head. The polypeptide is Protein spalt-accessory (sala) (Drosophila melanogaster (Fruit fly)).